Here is a 332-residue protein sequence, read N- to C-terminus: Ferredoxin--NADP reductase 1 (332 aa).

FAD contacts are provided by D35, K43, F48, V88, F123, D284, and T325.

The protein belongs to the ferredoxin--NADP reductase type 2 family. Homodimer. FAD is required as a cofactor.

The enzyme catalyses 2 reduced [2Fe-2S]-[ferredoxin] + NADP(+) + H(+) = 2 oxidized [2Fe-2S]-[ferredoxin] + NADPH. The chain is Ferredoxin--NADP reductase 1 from Listeria innocua serovar 6a (strain ATCC BAA-680 / CLIP 11262).